The chain runs to 428 residues: Histidine--tRNA ligase (428 aa).

It belongs to the class-II aminoacyl-tRNA synthetase family. Homodimer.

Its subcellular location is the cytoplasm. The catalysed reaction is tRNA(His) + L-histidine + ATP = L-histidyl-tRNA(His) + AMP + diphosphate + H(+). The protein is Histidine--tRNA ligase of Chlamydia trachomatis serovar A (strain ATCC VR-571B / DSM 19440 / HAR-13).